The primary structure comprises 398 residues: ORC1-type DNA replication protein 1 (398 aa).

ATP is bound by residues 67–71 (TGKTA), Y208, and R220.

Belongs to the CDC6/cdc18 family.

In terms of biological role, involved in regulation of DNA replication. In Sulfurisphaera tokodaii (strain DSM 16993 / JCM 10545 / NBRC 100140 / 7) (Sulfolobus tokodaii), this protein is ORC1-type DNA replication protein 1 (cdc6-1).